The primary structure comprises 192 residues: Peptidyl-tRNA hydrolase (192 aa).

Y17 contributes to the tRNA binding site. The active-site Proton acceptor is H22. Residues F67, N69, and N115 each coordinate tRNA.

The protein belongs to the PTH family. In terms of assembly, monomer.

It is found in the cytoplasm. It carries out the reaction an N-acyl-L-alpha-aminoacyl-tRNA + H2O = an N-acyl-L-amino acid + a tRNA + H(+). Functionally, hydrolyzes ribosome-free peptidyl-tRNAs (with 1 or more amino acids incorporated), which drop off the ribosome during protein synthesis, or as a result of ribosome stalling. In terms of biological role, catalyzes the release of premature peptidyl moieties from peptidyl-tRNA molecules trapped in stalled 50S ribosomal subunits, and thus maintains levels of free tRNAs and 50S ribosomes. In Methylobacillus flagellatus (strain ATCC 51484 / DSM 6875 / VKM B-1610 / KT), this protein is Peptidyl-tRNA hydrolase.